The following is a 218-amino-acid chain: Phosphatidylserine decarboxylase proenzyme (218 aa).

Ser-187 acts as the Schiff-base intermediate with substrate; via pyruvic acid in catalysis. Ser-187 is modified (pyruvic acid (Ser); by autocatalysis).

This sequence belongs to the phosphatidylserine decarboxylase family. PSD-A subfamily. Heterodimer of a large membrane-associated beta subunit and a small pyruvoyl-containing alpha subunit. Requires pyruvate as cofactor. Is synthesized initially as an inactive proenzyme. Formation of the active enzyme involves a self-maturation process in which the active site pyruvoyl group is generated from an internal serine residue via an autocatalytic post-translational modification. Two non-identical subunits are generated from the proenzyme in this reaction, and the pyruvate is formed at the N-terminus of the alpha chain, which is derived from the carboxyl end of the proenzyme. The post-translation cleavage follows an unusual pathway, termed non-hydrolytic serinolysis, in which the side chain hydroxyl group of the serine supplies its oxygen atom to form the C-terminus of the beta chain, while the remainder of the serine residue undergoes an oxidative deamination to produce ammonia and the pyruvoyl prosthetic group on the alpha chain.

The protein resides in the cell membrane. The catalysed reaction is a 1,2-diacyl-sn-glycero-3-phospho-L-serine + H(+) = a 1,2-diacyl-sn-glycero-3-phosphoethanolamine + CO2. Its pathway is phospholipid metabolism; phosphatidylethanolamine biosynthesis; phosphatidylethanolamine from CDP-diacylglycerol: step 2/2. Its function is as follows. Catalyzes the formation of phosphatidylethanolamine (PtdEtn) from phosphatidylserine (PtdSer). The protein is Phosphatidylserine decarboxylase proenzyme of Geobacter sulfurreducens (strain ATCC 51573 / DSM 12127 / PCA).